The following is a 261-amino-acid chain: WW domain-binding protein 2 (261 aa).

Positions 1–84 (MALNKNHSEG…YLMKDCEIKQ (84 aa)) constitute a GRAM domain. Phosphotyrosine is present on Tyr192. Positions 196–200 (PPPPY) match the PPxY motif 1 motif. Over residues 196–209 (PPPPYPGPMEPPVS) the composition is skewed to pro residues. Positions 196–261 (PPPPYPGPME…YYPPEDKKTQ (66 aa)) are disordered. Positions 210-230 (GPSAPATPAAEAKAAEAAASA) are enriched in low complexity. The residue at position 231 (Tyr231) is a Phosphotyrosine. Positions 245–254 (SQPPPPPYYP) are enriched in pro residues. Positions 248–252 (PPPPY) match the PPxY motif 2 motif.

In terms of assembly, binds to the WW domain of YAP1, WWP1 and WWP2. Interacts with NEDD4. Interacts with ESR1 and UBE3A. In terms of processing, phosphorylated in repsonse to EGF as well as estrogen and progesterone hormones. Tyr-192 and Tyr-231 are phosphorylated by YES and SRC inducing nuclear translocation. Expressed in the ear and the eye. Isoform 1 is expressed in brain, inner ear and organ of Corti. Isoform 2 is only detected in brain.

Its subcellular location is the cytoplasm. It localises to the nucleus. Functionally, acts as a transcriptional coactivator of estrogen and progesterone receptors (ESR1 and PGR) upon hormone activation. In presence of estrogen, binds to ESR1-responsive promoters. Synergizes with YAP1 to enhance PGR activity. Modulates expression of post-synaptic scaffolding proteins via regulation of ESR1, ESR2 and PGR. This chain is WW domain-binding protein 2 (Wbp2), found in Mus musculus (Mouse).